The chain runs to 329 residues: NAD(+) hydrolase TcpA (329 aa).

Positions 5–134 constitute an MPN domain; sequence VSISYLALEQ…ADCVRFYTVR (130 aa). The 133-residue stretch at 192–324 folds into the TIR domain; the sequence is FEYDVFICHA…YVVNEILRVL (133 aa). Residues 201-202 and Ser-231 contribute to the NAD(+) site; that span reads AH. Residue Glu-267 is part of the active site.

The enzyme catalyses NAD(+) + H2O = ADP-D-ribose + nicotinamide + H(+). Functionally, NAD(+) hydrolase (NADase) that catalyzes cleavage of NAD(+) into ADP-D-ribose (ADPR) and nicotinamide. The protein is NAD(+) hydrolase TcpA of Theionarchaea archaeon (strain DG-70-1).